The sequence spans 388 residues: Succinate--CoA ligase [ADP-forming] subunit beta (388 aa).

Positions 9–244 constitute an ATP-grasp domain; the sequence is KQLFAEYGLP…PSQDDPREAH (236 aa). ATP is bound by residues K46, 53-55, E99, T102, and E107; that span reads GRG. Residues N199 and D213 each contribute to the Mg(2+) site. Residues N264 and 321–323 contribute to the substrate site; that span reads GIV.

The protein belongs to the succinate/malate CoA ligase beta subunit family. In terms of assembly, heterotetramer of two alpha and two beta subunits. It depends on Mg(2+) as a cofactor.

The catalysed reaction is succinate + ATP + CoA = succinyl-CoA + ADP + phosphate. It catalyses the reaction GTP + succinate + CoA = succinyl-CoA + GDP + phosphate. It participates in carbohydrate metabolism; tricarboxylic acid cycle; succinate from succinyl-CoA (ligase route): step 1/1. Succinyl-CoA synthetase functions in the citric acid cycle (TCA), coupling the hydrolysis of succinyl-CoA to the synthesis of either ATP or GTP and thus represents the only step of substrate-level phosphorylation in the TCA. The beta subunit provides nucleotide specificity of the enzyme and binds the substrate succinate, while the binding sites for coenzyme A and phosphate are found in the alpha subunit. This is Succinate--CoA ligase [ADP-forming] subunit beta from Pseudomonas syringae pv. syringae (strain B728a).